A 176-amino-acid chain; its full sequence is Pituitary adenylate cyclase-activating polypeptide (176 aa).

Positions 1-24 are cleaved as a signal peptide; that stretch reads MTMCSGARLALLVYGILMHSSVYG. Residues 25–80 constitute a propeptide that is removed on maturation; that stretch reads SPAASGLRFPGIRPENEAYDEDGNPQQDFYDSEPPGVGSPASALRDAYALYYPAEE. Disordered regions lie at residues 36-62 and 115-134; these read IRPE…PGVG and GTPG…RHSD. Positions 150-158 are important for receptor binding; it reads VKKYLAAVL. Leu-158 carries the leucine amide modification. Position 169 is a lysine amide (Lys-169). Residues 173–176 constitute a propeptide that is removed on maturation; sequence IPYL.

This sequence belongs to the glucagon family.

Its subcellular location is the secreted. Its function is as follows. PACAP is a neuropeptide involved in diverse array of physiological processes through activating the PACAP subfamily of class B1 G protein-coupled receptors: VIP receptor 1 (VIPR1), VIP receptor 2 (VIPR2), and PACAP type I receptor (ADCYAP1R1). Exerts neuroprotective and general cytoprotective effects due to anti-apoptotic, anti-inflammatory, and antioxidant actions. Promotes neuron projection development through the RAPGEF2/Rap1/B-Raf/ERK pathway. In chromaffin cells, induces long-lasting increase of intracellular calcium concentrations and neuroendocrine secretion. Involved in the control of glucose homeostasis, induces insulin secretion by pancreatic beta cells. PACAP exists in two bioactive forms from proteolysis of the same precursor protein, PACAP27 and PACAP38, which differ by eleven amino acid residues in the C-terminus. The protein is Pituitary adenylate cyclase-activating polypeptide (ADCYAP1) of Ovis aries (Sheep).